Reading from the N-terminus, the 363-residue chain is Insulin gene enhancer protein ISL-3 (363 aa).

LIM zinc-binding domains lie at 27 to 80 (CVGC…CKRD) and 89 to 143 (CAKC…RADH). The segment at residues 191 to 250 (TTRVRTVLNEKQLHTLRTCYNANPRPDALMREQLVEMTGLSPRVIRVWFQNKRCKDKKRS) is a DNA-binding region (homeobox). The interval 328–363 (FSESGSLGNSSGSDVTSLSSHLPDTPNSMVPSPVET) is disordered. Over residues 329–340 (SESGSLGNSSGS) the composition is skewed to low complexity. Residues 341–363 (DVTSLSSHLPDTPNSMVPSPVET) are compositionally biased toward polar residues.

Its subcellular location is the nucleus. Functionally, binds to one of the cis-acting domain of the insulin gene enhancer. May be involved in subtype specialization of primary motoneurons. In Oncorhynchus tshawytscha (Chinook salmon), this protein is Insulin gene enhancer protein ISL-3 (isl3).